The chain runs to 257 residues: MTSLLEIKDLTAFYGPLRAIKDVSLSIQEGSVTALIGPSGCGKSTLLRTLNRMHELSPGAKVKGQVLLDGRDLYQLDPVYVRQEVGMISQRPNPFPTMSIRENVLAGIKLNRKRIHRIQQNELMERCLRSVNLWDEVHNRLGRPGGELSGGQQQRLCIARAIAVSPRVILMDEPCSALDPVSTKAIEQLICKLKEKHTIVIVTHNMQQASRVSDWTAVFNVARSGGSGELVEHDKTEVIFTSPKNEVTLNYISGKFG.

The ABC transporter domain maps to 5–246; sequence LEIKDLTAFY…EVIFTSPKNE (242 aa). ATP is bound at residue 37–44; it reads GPSGCGKS.

Belongs to the ABC transporter superfamily. Phosphate importer (TC 3.A.1.7) family. The complex is composed of two ATP-binding proteins (PstB), two transmembrane proteins (PstC and PstA) and a solute-binding protein (PstS).

It is found in the cell membrane. It carries out the reaction phosphate(out) + ATP + H2O = ADP + 2 phosphate(in) + H(+). Functionally, part of the ABC transporter complex PstSACB involved in phosphate import. Responsible for energy coupling to the transport system. In Tropheryma whipplei (strain TW08/27) (Whipple's bacillus), this protein is Phosphate import ATP-binding protein PstB.